A 507-amino-acid polypeptide reads, in one-letter code: 25-hydroxyvitamin D-1 alpha hydroxylase, mitochondrial (507 aa).

Cys454 contributes to the heme binding site.

This sequence belongs to the cytochrome P450 family. It depends on heme as a cofactor. Kidney.

It localises to the mitochondrion membrane. The catalysed reaction is calcidiol + 2 reduced [adrenodoxin] + O2 + 2 H(+) = calcitriol + 2 oxidized [adrenodoxin] + H2O. It catalyses the reaction secalciferol + 2 reduced [adrenodoxin] + O2 + 2 H(+) = calcitetrol + 2 oxidized [adrenodoxin] + H2O. The enzyme catalyses 25-hydroxy-24-oxocalciol + 2 reduced [adrenodoxin] + O2 + 2 H(+) = (1S)-1,25-dihydroxy-24-oxocalciol + 2 oxidized [adrenodoxin] + H2O. It carries out the reaction 25-hydroxyvitamin D2 + 2 reduced [adrenodoxin] + O2 + 2 H(+) = 1alpha,25-dihydroxyvitamin D2 + 2 oxidized [adrenodoxin] + H2O. It functions in the pathway hormone biosynthesis; vitamin D biosynthesis. With respect to regulation, activated by cardiolipin and dioleoyl phosphatidylethanolamine (DOPE), phospholipids found in the inner mitochondrial membrane. Inhibited by high substrate concentration. Functionally, a cytochrome P450 monooxygenase involved in vitamin D metabolism and in calcium and phosphorus homeostasis. Catalyzes the rate-limiting step in the activation of vitamin D in the kidney, namely the hydroxylation of 25-hydroxyvitamin D3/calcidiol at the C1-alpha position to form the hormonally active form of vitamin D3, 1alpha,25-dihydroxyvitamin D3/calcitriol that acts via the vitamin D receptor (VDR). Has 1-alpha-hydroxylase activity on vitamin D intermediates of the CYP24A1-mediated inactivation pathway. Converts 24R,25-dihydroxyvitamin D3/secalciferol to 1-alpha,24,25-trihydroxyvitamin D3, an active ligand of VDR. Also active on 25-hydroxyvitamin D2. Mechanistically, uses molecular oxygen inserting one oxygen atom into a substrate, and reducing the second into a water molecule, with two electrons provided by NADPH via FDXR/adrenodoxin reductase and FDX1/adrenodoxin. The polypeptide is 25-hydroxyvitamin D-1 alpha hydroxylase, mitochondrial (Cyp27b1) (Mus musculus (Mouse)).